The primary structure comprises 334 residues: Inositol 2-dehydrogenase (334 aa).

It belongs to the Gfo/Idh/MocA family. Homotetramer.

It catalyses the reaction myo-inositol + NAD(+) = scyllo-inosose + NADH + H(+). Its function is as follows. Involved in the oxidation of myo-inositol (MI) to 2-keto-myo-inositol (2KMI or 2-inosose). The chain is Inositol 2-dehydrogenase from Cereibacter sphaeroides (strain ATCC 17023 / DSM 158 / JCM 6121 / CCUG 31486 / LMG 2827 / NBRC 12203 / NCIMB 8253 / ATH 2.4.1.) (Rhodobacter sphaeroides).